A 77-amino-acid chain; its full sequence is Secapin (77 aa).

Residues 1 to 32 (MKNYSKNATYLITVLLFSFVAMLLIIPSKCEA) form the signal peptide. Residues 33–52 (VSNDMQPLEARTADLVQQPR) constitute a propeptide that is removed on maturation. C61 and C72 are disulfide-bonded.

Belongs to the secapin family. Expressed by the venom gland.

The protein resides in the secreted. In terms of biological role, nontoxic peptide. The polypeptide is Secapin (Apis cerana cerana (Oriental honeybee)).